Here is a 93-residue protein sequence, read N- to C-terminus: Putative pterin-4-alpha-carbinolamine dehydratase (93 aa).

The protein belongs to the pterin-4-alpha-carbinolamine dehydratase family.

The enzyme catalyses (4aS,6R)-4a-hydroxy-L-erythro-5,6,7,8-tetrahydrobiopterin = (6R)-L-erythro-6,7-dihydrobiopterin + H2O. The protein is Putative pterin-4-alpha-carbinolamine dehydratase of Nostoc sp. (strain PCC 7120 / SAG 25.82 / UTEX 2576).